The sequence spans 174 residues: Shikimate kinase 2 (174 aa).

An ATP-binding site is contributed by 12-17 (GCGKTT). Residues Thr-16 and Asp-32 each coordinate Mg(2+). Asp-34, Arg-58, and Gly-79 together coordinate substrate. The tract at residues 112 to 126 (QAAPEEDLRPTLTGK) is LID domain. Arg-120 lines the ATP pocket. Arg-139 serves as a coordination point for substrate.

Belongs to the shikimate kinase family. AroL subfamily. As to quaternary structure, monomer. Mg(2+) serves as cofactor.

Its subcellular location is the cytoplasm. The catalysed reaction is shikimate + ATP = 3-phosphoshikimate + ADP + H(+). It participates in metabolic intermediate biosynthesis; chorismate biosynthesis; chorismate from D-erythrose 4-phosphate and phosphoenolpyruvate: step 5/7. Its function is as follows. Catalyzes the specific phosphorylation of the 3-hydroxyl group of shikimic acid using ATP as a cosubstrate. This is Shikimate kinase 2 from Escherichia coli O7:K1 (strain IAI39 / ExPEC).